The primary structure comprises 140 residues: Lymphocyte antigen 6H (140 aa).

Positions 1-25 are cleaved as a signal peptide; that stretch reads MLPAAMKGLGLALLAVLLCSAPAHG. Positions 26–91 constitute a UPAR/Ly6 domain; the sequence is LWCQDCTLTT…RHFFSDYLMG (66 aa). 4 disulfides stabilise this stretch: cysteine 28–cysteine 52, cysteine 31–cysteine 40, cysteine 45–cysteine 73, and cysteine 77–cysteine 104. Asparagine 36 carries an N-linked (GlcNAc...) asparagine glycan. A lipid anchor (GPI-anchor amidated glycine) is attached at glycine 115. The propeptide at 116 to 140 is removed in mature form; that stretch reads AGHSPWALAGGLLLSLGPALLWAGP.

Interacts with CHRNA4 and CHRNA7.

Its subcellular location is the cell membrane. Its function is as follows. Believed to act as a modulator of nicotinic acetylcholine receptors (nAChRs) activity. In vitro inhibits alpha-3:beta-4-containing nAChRs maximum response. May play a role in the intracellular trafficking of alpha-7-containing nAChRs and may inhibit their expression at the cell surface. Seems to inhibit alpha-7/CHRNA7 signaling in hippocampal neurons. This is Lymphocyte antigen 6H (LY6H) from Macaca fascicularis (Crab-eating macaque).